The following is a 218-amino-acid chain: Antifreeze protein Maxi (218 aa).

The signal sequence occupies residues 1-23 (MALSLFTVGQFIFLFWTISITEA).

Belongs to the type-I AFP family. In terms of assembly, homodimer. Detected in blood serum (at protein level). Detected in liver.

Its subcellular location is the secreted. Its function is as follows. Contributes to protect fish blood from freezing at subzero sea water temperatures. Lowers the blood freezing point by about 1.1 degrees at a concentration of 0.1 mg/ml, and by about 1.5 degrees at a concentration of 0.2 mg/ml. Binds to nascent ice crystals and prevents further growth. This is Antifreeze protein Maxi from Pseudopleuronectes americanus (Winter flounder).